The sequence spans 452 residues: Acetyl-CoA decarbonylase/synthase complex subunit delta (452 aa).

This sequence belongs to the CdhD family. In terms of assembly, heterodimer of delta and gamma chains. The ACDS complex is made up of alpha, epsilon, beta, gamma and delta chains with a probable stoichiometry of (alpha(2)epsilon(2))(4)-beta(8)-(gamma(1)delta(1))(8).

Functionally, part of a complex that catalyzes the reversible cleavage of acetyl-CoA, allowing autotrophic growth from CO(2). Probably maintains the overall quaternary structure of the ACDS complex. The chain is Acetyl-CoA decarbonylase/synthase complex subunit delta from Archaeoglobus fulgidus (strain ATCC 49558 / DSM 4304 / JCM 9628 / NBRC 100126 / VC-16).